A 263-amino-acid polypeptide reads, in one-letter code: ATP synthase subunit a (263 aa).

A propeptide spans 1–14 (removed in mature form); the sequence is MYLNNNNNMKYYIN. Transmembrane regions (helical) follow at residues 35–57, 95–117, 129–151, 156–178, 191–213, and 228–250; these read FSFI…ILTM, VWGY…NLIS, VVFV…FYTH, FGLF…IELL, LSAN…FNLM, and IAIL…VWCI.

Belongs to the ATPase A chain family. As to quaternary structure, F-type ATPases have 2 components, CF(1) - the catalytic core - and CF(0) - the membrane proton channel. In yeast, the dimeric form of ATP synthase consists of 18 polypeptides: alpha, beta, gamma, delta, epsilon, 4 (B), 5 (OSCP), 6 (A), 8, 9 (C), d, E (Tim11), f, g, h, i, j and k.

The protein resides in the mitochondrion inner membrane. Its function is as follows. Mitochondrial membrane ATP synthase (F(1)F(0) ATP synthase or Complex V) produces ATP from ADP in the presence of a proton gradient across the membrane which is generated by electron transport complexes of the respiratory chain. F-type ATPases consist of two structural domains, F(1) - containing the extramembraneous catalytic core and F(0) - containing the membrane proton channel, linked together by a central stalk and a peripheral stalk. During catalysis, ATP synthesis in the catalytic domain of F(1) is coupled via a rotary mechanism of the central stalk subunits to proton translocation. Key component of the proton channel; it may play a direct role in the translocation of protons across the membrane. This chain is ATP synthase subunit a (ATP6), found in Eremothecium gossypii (strain ATCC 10895 / CBS 109.51 / FGSC 9923 / NRRL Y-1056) (Yeast).